A 350-amino-acid polypeptide reads, in one-letter code: Ribosomal RNA large subunit methyltransferase M (350 aa).

Residues 217–220, Asp236, Asp256, and Asp272 each bind S-adenosyl-L-methionine; that span reads APGG. Lys301 (proton acceptor) is an active-site residue.

This sequence belongs to the class I-like SAM-binding methyltransferase superfamily. RNA methyltransferase RlmE family. RlmM subfamily. Monomer.

The protein resides in the cytoplasm. It catalyses the reaction cytidine(2498) in 23S rRNA + S-adenosyl-L-methionine = 2'-O-methylcytidine(2498) in 23S rRNA + S-adenosyl-L-homocysteine + H(+). Functionally, catalyzes the 2'-O-methylation at nucleotide C2498 in 23S rRNA. This Teredinibacter turnerae (strain ATCC 39867 / T7901) protein is Ribosomal RNA large subunit methyltransferase M.